Consider the following 258-residue polypeptide: (S)-hydroxynitrile lyase (258 aa).

The AB hydrolase-1 domain occupies 5 to 242 (HFVLIHTICH…GGDHKLQLTK (238 aa)). Thr-11 and Ser-80 together coordinate 2-hydroxy-2-methylpropanenitrile. Thr-11, Ser-80, and Cys-81 together coordinate acetone. Ser-80 functions as the Proton donor/acceptor in the catalytic mechanism. The active-site Proton donor/acceptor is His-236.

This sequence belongs to the AB hydrolase superfamily. Hydroxynitrile lyase family. In terms of assembly, homotetramer.

It catalyses the reaction a monosubstituted aliphatic (S)-hydroxynitrile = an aldehyde + hydrogen cyanide. The enzyme catalyses a disubstituted aliphatic (S)-hydroxynitrile = a ketone + hydrogen cyanide. It carries out the reaction an aromatic (S)-hydroxynitrile = an aromatic aldehyde + hydrogen cyanide. The catalysed reaction is 2-hydroxy-2-methylpropanenitrile = acetone + hydrogen cyanide. It catalyses the reaction butan-2-one + hydrogen cyanide = 2-hydroxy-2-methylbutanenitrile. The enzyme catalyses pentan-2-one + hydrogen cyanide = (2S)-2-hydroxy-2-methylpentanenitrile. It carries out the reaction hexan-2-one + hydrogen cyanide = (2S)-2-hydroxy-2-methylhexanenitrile. The catalysed reaction is heptan-2-one + hydrogen cyanide = (2S)-2-hydroxy-2-methylheptanenitrile. It catalyses the reaction 4-methylpentan-2-one + hydrogen cyanide = (2S)-2-hydroxy-2,4-dimethylpentanenitrile. The enzyme catalyses 3,3-dimethylbutan-2-one + hydrogen cyanide = (2S)-2-hydroxy-2-methyl-3,3-dimethylbutanenitrile. It carries out the reaction acetophenone + hydrogen cyanide = (2S)-2-hydroxy-2-phenylpropanenitrile. The catalysed reaction is propanal + hydrogen cyanide = (2S)-2-hydroxybutanenitrile. It catalyses the reaction pentanal + hydrogen cyanide = (2S)-2-hydroxyhexanenitrile. The enzyme catalyses 2-methylpropanal + hydrogen cyanide = (2S)-2-hydroxy-3-methylbutanenitrile. It carries out the reaction 2,2-dimethylpropanal + hydrogen cyanide = (2S)-2-hydroxy-3,3-dimethylbutanenitrile. The catalysed reaction is acrolein + hydrogen cyanide = (2S)-2-hydroxybut-3-enenitrile. It catalyses the reaction (2E)-but-2-enal + hydrogen cyanide = (2S,3E)-2-hydroxypent-3-enenitrile. The enzyme catalyses (E)-hex-2-enal + hydrogen cyanide = (2S,3E)-2-hydroxyhept-3-enenitrile. It carries out the reaction cyclohexanecarbaldehyde + hydrogen cyanide = (2S)-2-cyclohexyl-2-hydroxyacetonitrile. The catalysed reaction is benzaldehyde + hydrogen cyanide = (S)-mandelonitrile. It catalyses the reaction 4-methoxybenzaldehyde + hydrogen cyanide = (2S)-2-hydroxy-2-(4-methoxyphenyl)acetonitrile. The enzyme catalyses piperonal + hydrogen cyanide = (2S)-2-(2H-1,3-benzodioxol-5-yl)-2-hydroxyacetonitrile. It carries out the reaction formylthiophene + hydrogen cyanide = (2R)-2-hydroxy-2-(thiophen-2-yl)acetonitrile. The catalysed reaction is 3-formylthiophene + hydrogen cyanide = (2S)-2-hydroxy-2-(thiophen-3-yl)acetonitrile. It catalyses the reaction furan-3-carbaldehyde + hydrogen cyanide = (2S)-2-(furan-3-yl)-2-hydroxyacetonitrile. In terms of biological role, involved in cyanogenesis, the release of HCN from cyanogenic glycosides in injured tissues; the release of toxic HCN is believed to play a central role in the defense mechanism of plants against herbivores and microbial attack. Decomposes a variety of cyanohydrins (alpha-hydroxynitriles) into HCN and the corresponding aldehydes or ketones; two natural substrates are 2-hydroxy-2-methylpropanenitrile (acetone cyanohydrin) and 2-hydroxy-2-methylbutanenitrile (2-butanone cyanohydrin), but in vitro can also act on 2-hydroxy-2-methylpentanenitrile (2-pentanone cyanohydrin) and mandelonitrile. Is also able to catalyze the reverse reaction in vitro, leading to the stereospecific synthesis of aliphatic, aromatic, and heterocyclic cyanohydrins, important intermediates in the production of various agrochemicals or pharmaceuticals. The polypeptide is (S)-hydroxynitrile lyase (Manihot esculenta (Cassava)).